The primary structure comprises 154 residues: ATP synthase subunit b (154 aa).

A helical membrane pass occupies residues 9–29 (AIAFVIFVWFCMKYVWPPLMA).

Belongs to the ATPase B chain family. As to quaternary structure, F-type ATPases have 2 components, F(1) - the catalytic core - and F(0) - the membrane proton channel. F(1) has five subunits: alpha(3), beta(3), gamma(1), delta(1), epsilon(1). F(0) has three main subunits: a(1), b(2) and c(10-14). The alpha and beta chains form an alternating ring which encloses part of the gamma chain. F(1) is attached to F(0) by a central stalk formed by the gamma and epsilon chains, while a peripheral stalk is formed by the delta and b chains.

The protein localises to the cell inner membrane. In terms of biological role, f(1)F(0) ATP synthase produces ATP from ADP in the presence of a proton or sodium gradient. F-type ATPases consist of two structural domains, F(1) containing the extramembraneous catalytic core and F(0) containing the membrane proton channel, linked together by a central stalk and a peripheral stalk. During catalysis, ATP synthesis in the catalytic domain of F(1) is coupled via a rotary mechanism of the central stalk subunits to proton translocation. Component of the F(0) channel, it forms part of the peripheral stalk, linking F(1) to F(0). The protein is ATP synthase subunit b of Klebsiella pneumoniae subsp. pneumoniae (strain ATCC 700721 / MGH 78578).